We begin with the raw amino-acid sequence, 249 residues long: UDP-N-acetyl-D-mannosaminuronic acid transferase (249 aa).

It belongs to the glycosyltransferase 26 family.

It catalyses the reaction UDP-N-acetyl-alpha-D-mannosaminouronate + N-acetyl-alpha-D-glucosaminyl-di-trans,octa-cis-undecaprenyl diphosphate = beta-D-ManNAcA-(1-&gt;4)-alpha-D-GlcNAc-di-trans,octa-cis-undecaprenyl diphosphate + UDP + H(+). Its pathway is bacterial outer membrane biogenesis; enterobacterial common antigen biosynthesis. In terms of biological role, catalyzes the synthesis of Und-PP-GlcNAc-ManNAcA (Lipid II), the second lipid-linked intermediate involved in enterobacterial common antigen (ECA) synthesis. This Pectobacterium carotovorum subsp. carotovorum (strain PC1) protein is UDP-N-acetyl-D-mannosaminuronic acid transferase.